The following is a 309-amino-acid chain: Carbonic anhydrase 4 (309 aa).

The N-terminal stretch at 1–17 (MQLLLALLALAYVAPST) is a signal peptide. In terms of domain architecture, Alpha-carbonic anhydrase spans 20-282 (SHWCYEIQAK…LGNRQVFRSH (263 aa)). 2 cysteine pairs are disulfide-bonded: C23–C35 and C45–C226. The active-site Proton donor/acceptor is the H87. Residues H114, H116, and H139 each coordinate Zn(2+). A glycan (N-linked (GlcNAc...) asparagine) is linked at N193. 222-223 (TT) contributes to the substrate binding site. S281 carries the GPI-anchor amidated serine lipid modification. The propeptide at 282 to 309 (HASGRLLSLPLPTLLVPTLTCLVASFLH) is removed in mature form.

It belongs to the alpha-carbonic anhydrase family. Interacts with SLC4A4. It depends on Zn(2+) as a cofactor. Post-translationally, the N-terminus is blocked. In terms of processing, glycosylated. In terms of tissue distribution, present in kidney and lung. Also particularly abundant in brain, muscle, heart and liver. Not detected in skin or spleen.

It is found in the cell membrane. The catalysed reaction is hydrogencarbonate + H(+) = CO2 + H2O. Its activity is regulated as follows. Inhibited by acetazolamide. In terms of biological role, catalyzes the reversible hydration of carbon dioxide into bicarbonate and protons and thus is essential to maintaining intracellular and extracellular pH. May stimulate the sodium/bicarbonate transporter activity of SLC4A4 that acts in pH homeostasis. It is essential for acid overload removal from the retina and retina epithelium, and acid release in the choriocapillaris in the choroid. In Rattus norvegicus (Rat), this protein is Carbonic anhydrase 4 (Ca4).